The primary structure comprises 1350 residues: ABC-type transporter MDR1 (1350 aa).

Positions 1–11 are enriched in basic and acidic residues; that stretch reads MDTVHEGHHGS. Positions 1–84 are disordered; sequence MDTVHEGHHG…DEGEDPFAHL (84 aa). The span at 22–33 shows a compositional bias: polar residues; it reads VEVTNYEKTQLG. Residues 52 to 63 are compositionally biased toward basic residues; that stretch reads KKHKSQKEKKHK. Residues 121-411 form the ABC transmembrane type-1 1 domain; sequence VLSALSSIIG…VAPNIQAFTT (291 aa). 6 helical membrane-spanning segments follow: residues 124-144, 170-190, 243-263, 271-291, 350-370, and 380-400; these read ALSSIIGGALLPLMTIVFGGL, LYFLYLAIGEFVFVYIATAGF, KVGLTLTALATFITAFVVSFI, ILMSTVFAIVFTMGGMSGFIV, GSMIGFLMCYVYLNYSLAFWM, and IEVGDVLTIILSIMIGAFALG. An ABC transporter 1 domain is found at 446–691; sequence IELRNIRHIY…QGAYYNLVEA (246 aa). 481 to 488 is a binding site for ATP; the sequence is GESGSGKS. A compositionally biased stretch (basic and acidic residues) spans 712 to 731; that stretch reads KDQNLKHETTKGEQPEDGLK. The interval 712-734 is disordered; sequence KDQNLKHETTKGEQPEDGLKLAR. Transmembrane regions (helical) follow at residues 779–799, 830–850, 903–923, 929–949, 1014–1034, and 1044–1064; these read IGIICSVITGGGNPTQAVFFA, FMLALVQFSAFLIQGYVFAVC, LGTILSVIVTLVAAFSVSLAI, LVCISTVPILLACGFLRFWML, ASQSLIFCCTALGFWYGGTLI, and FFLCFSAVIFGAQSAGTIFSF. Positions 779–1070 constitute an ABC transmembrane type-1 2 domain; the sequence is IGIICSVITG…IFSFAPDMGK (292 aa). The ABC transporter 2 domain maps to 1105–1343; the sequence is IEFRDVHFRY…RGRYWELVNL (239 aa). The N-linked (GlcNAc...) asparagine glycan is linked to N1127. Residue 1140 to 1147 participates in ATP binding; sequence GASGCGKS.

It belongs to the ABC transporter superfamily. ABCB family. Multidrug resistance exporter (TC 3.A.1.201) subfamily.

The protein resides in the cell membrane. Its function is as follows. ABC-type transporter that is involved in the secretion of liamocins, glycolipids (also called heavy oils) composed of a single mannitol or arabitol headgroup linked to either three, four or even six 3,5-dihydroxydecanoic ester tail-groups. The protein is ABC-type transporter MDR1 of Aureobasidium melanogenum (Aureobasidium pullulans var. melanogenum).